A 200-amino-acid polypeptide reads, in one-letter code: ATP-dependent Clp protease proteolytic subunit 2 (200 aa).

Catalysis depends on serine 99, which acts as the Nucleophile. Histidine 123 is a catalytic residue.

This sequence belongs to the peptidase S14 family. In terms of assembly, fourteen ClpP subunits assemble into 2 heptameric rings which stack back to back to give a disk-like structure with a central cavity, resembling the structure of eukaryotic proteasomes.

It localises to the cytoplasm. The enzyme catalyses Hydrolysis of proteins to small peptides in the presence of ATP and magnesium. alpha-casein is the usual test substrate. In the absence of ATP, only oligopeptides shorter than five residues are hydrolyzed (such as succinyl-Leu-Tyr-|-NHMec, and Leu-Tyr-Leu-|-Tyr-Trp, in which cleavage of the -Tyr-|-Leu- and -Tyr-|-Trp bonds also occurs).. In terms of biological role, cleaves peptides in various proteins in a process that requires ATP hydrolysis. Has a chymotrypsin-like activity. Plays a major role in the degradation of misfolded proteins. In Symbiobacterium thermophilum (strain DSM 24528 / JCM 14929 / IAM 14863 / T), this protein is ATP-dependent Clp protease proteolytic subunit 2.